The sequence spans 160 residues: Cyclic pyranopterin monophosphate synthase (160 aa).

Residues 76–78 (MCH) and 113–114 (ME) each bind substrate. Asp128 is an active-site residue.

This sequence belongs to the MoaC family. In terms of assembly, homohexamer; trimer of dimers.

The enzyme catalyses (8S)-3',8-cyclo-7,8-dihydroguanosine 5'-triphosphate = cyclic pyranopterin phosphate + diphosphate. It functions in the pathway cofactor biosynthesis; molybdopterin biosynthesis. Its function is as follows. Catalyzes the conversion of (8S)-3',8-cyclo-7,8-dihydroguanosine 5'-triphosphate to cyclic pyranopterin monophosphate (cPMP). The polypeptide is Cyclic pyranopterin monophosphate synthase (Brevibacillus brevis (strain 47 / JCM 6285 / NBRC 100599)).